Here is a 1643-residue protein sequence, read N- to C-terminus: RNA replication protein (1643 aa).

The Alphavirus-like MT domain maps to asparagine 59–leucine 224. The interval arginine 686–lysine 711 is disordered. Over residues serine 690–valine 700 the composition is skewed to polar residues. A (+)RNA virus helicase ATP-binding domain is found at serine 828–leucine 996. Glycine 868 to serine 875 is an ATP binding site. The (+)RNA virus helicase C-terminal domain occupies asparagine 997–tyrosine 1132. The interval valine 1131–proline 1155 is disordered. A compositionally biased stretch (low complexity) spans proline 1136–proline 1155. In terms of domain architecture, RdRp catalytic spans arginine 1372–phenylalanine 1479. Residues glycine 1587–glutamine 1620 form a disordered region. Positions lysine 1608 to glutamine 1620 are enriched in basic residues.

Belongs to the potexvirus/carlavirus RNA replication protein family.

The catalysed reaction is RNA(n) + a ribonucleoside 5'-triphosphate = RNA(n+1) + diphosphate. It carries out the reaction ATP + H2O = ADP + phosphate + H(+). In terms of biological role, RNA replication. The central part of this protein possibly functions as an ATP-binding helicase. In Narcissus pseudonarcissus (Daffodil), this protein is RNA replication protein.